The primary structure comprises 415 residues: Putative competence-damage inducible protein (415 aa).

Belongs to the CinA family.

The polypeptide is Putative competence-damage inducible protein (Listeria welshimeri serovar 6b (strain ATCC 35897 / DSM 20650 / CCUG 15529 / CIP 8149 / NCTC 11857 / SLCC 5334 / V8)).